Reading from the N-terminus, the 280-residue chain is MTARIDAAFARCRAEGRAALVTYVMAGDPDPETSLKVLEALPKAGADIVEFGLPFTDPMADGPAIQAAGLRALKAGQDLRGTLALVRRFREGDDQTPVVLMGYYNPIHTYGVPHFLEDAQAAGIDGLIVVDLPPEEDEELCLPALEKGLAFIRLATPTTDEARLPAVLANTAGFVYYVSITGVTGTATPDFGRVSQAVSRITAHTNLPVVVGFGVKTGAHAAEIARGADGVVVGSALVDALARSLEPGDRAGSGTVEAVASLVRELAQGVRSAAKAPAGA.

Residues glutamate 50 and aspartate 61 each act as proton acceptor in the active site.

Belongs to the TrpA family. As to quaternary structure, tetramer of two alpha and two beta chains.

The enzyme catalyses (1S,2R)-1-C-(indol-3-yl)glycerol 3-phosphate + L-serine = D-glyceraldehyde 3-phosphate + L-tryptophan + H2O. Its pathway is amino-acid biosynthesis; L-tryptophan biosynthesis; L-tryptophan from chorismate: step 5/5. Functionally, the alpha subunit is responsible for the aldol cleavage of indoleglycerol phosphate to indole and glyceraldehyde 3-phosphate. This is Tryptophan synthase alpha chain from Methylorubrum extorquens (strain CM4 / NCIMB 13688) (Methylobacterium extorquens).